A 206-amino-acid polypeptide reads, in one-letter code: 2-phospho-L-lactate guanylyltransferase (206 aa).

The protein belongs to the CofC family. As to quaternary structure, homodimer.

The enzyme catalyses (2S)-2-phospholactate + GTP + H(+) = (2S)-lactyl-2-diphospho-5'-guanosine + diphosphate. It participates in cofactor biosynthesis; coenzyme F420 biosynthesis. In terms of biological role, guanylyltransferase that catalyzes the activation of (2S)-2-phospholactate (2-PL) as (2S)-lactyl-2-diphospho-5'-guanosine, via the condensation of 2-PL with GTP. It is involved in the biosynthesis of coenzyme F420, a hydride carrier cofactor. This chain is 2-phospho-L-lactate guanylyltransferase, found in Haloferax volcanii (strain ATCC 29605 / DSM 3757 / JCM 8879 / NBRC 14742 / NCIMB 2012 / VKM B-1768 / DS2) (Halobacterium volcanii).